The primary structure comprises 1385 residues: Defecation cycle abnormal dec-7 (1385 aa).

An N-terminal signal peptide occupies residues 1 to 19 (MWTARHAVALLVVLTYAYS). Asparagine 156 carries an N-linked (GlcNAc...) asparagine glycan. The interval 234-262 (SQTNYGAPNYQQAGAQSAANQQFSNPSQY) is disordered. Residues 242-261 (NYQQAGAQSAANQQFSNPSQ) show a composition bias toward low complexity. The NIDO domain occupies 285–450 (QIYGKRKKRQ…GRWIHRVDEV (166 aa)). N-linked (GlcNAc...) asparagine glycosylation is found at asparagine 313, asparagine 386, asparagine 413, asparagine 458, asparagine 480, asparagine 562, and asparagine 583. An AMOP domain is found at 681 to 840 (GRNWPIDMCI…DHCEFYYWRR (160 aa)). The VWFD domain occupies 852–1088 (AAGYIYGEPH…FWKIDGTNDK (237 aa)). Residues asparagine 909, asparagine 921, asparagine 975, asparagine 1009, and asparagine 1124 are each glycosylated (N-linked (GlcNAc...) asparagine). The Sushi domain maps to 1179 to 1238 (ISCGPLLKKEGVVKTPPAANYLDGDKVVFSCKPKYYIHGDIERVCRNGTWSPGWWAWCRD). Disulfide bonds link cysteine 1181–cysteine 1223 and cysteine 1209–cysteine 1236. Residue asparagine 1225 is glycosylated (N-linked (GlcNAc...) asparagine). A helical membrane pass occupies residues 1251 to 1271 (LLSIFGISLIFVIFFCILWNI). The interval 1321–1385 (MNQPSRPIPS…GNMRFETSAI (65 aa)) is disordered.

In terms of tissue distribution, highly expressed in the intestinal epithelia.

It localises to the membrane. The protein localises to the cell junction. Functionally, may negatively regulate activity of innexin gap junction protein inx-16, thereby mediating the rhythmic frequency of the defecation motor program. Required for the clustering of inx-16 to the cell-cell junction of the intestinal epithelia. Probably dispensable for intestinal integrity. May be a cytokine receptor. The chain is Defecation cycle abnormal dec-7 from Caenorhabditis elegans.